Reading from the N-terminus, the 307-residue chain is Geranylgeranyl diphosphate synthase (307 aa).

Positions 52, 55, and 86 each coordinate isopentenyl diphosphate. 2 residues coordinate Mg(2+): D93 and D99. R104 provides a ligand contact to (2E,6E)-farnesyl diphosphate. R105 contributes to the isopentenyl diphosphate binding site. K188, T189, and Q226 together coordinate (2E,6E)-farnesyl diphosphate.

The protein belongs to the FPP/GGPP synthase family. The cofactor is Mg(2+).

It carries out the reaction isopentenyl diphosphate + (2E,6E)-farnesyl diphosphate = (2E,6E,10E)-geranylgeranyl diphosphate + diphosphate. Its pathway is isoprenoid biosynthesis; geranylgeranyl diphosphate biosynthesis; geranylgeranyl diphosphate from farnesyl diphosphate and isopentenyl diphosphate: step 1/1. Its function is as follows. Catalyzes the condensation of farnesyl diphosphate (FPP) and isopentenyl diphosphate (IPP) to yield geranylgeranyl diphosphate (GGPP) needed for biosynthesis of carotenoids and diterpenes. This chain is Geranylgeranyl diphosphate synthase (crtE), found in Pseudescherichia vulneris (Escherichia vulneris).